Reading from the N-terminus, the 72-residue chain is Translation initiation factor IF-1 (72 aa).

One can recognise an S1-like domain in the interval 1-72; it reads MAKQDVIELE…TRGRITYRYK (72 aa).

The protein belongs to the IF-1 family. Component of the 30S ribosomal translation pre-initiation complex which assembles on the 30S ribosome in the order IF-2 and IF-3, IF-1 and N-formylmethionyl-tRNA(fMet); mRNA recruitment can occur at any time during PIC assembly.

The protein resides in the cytoplasm. Functionally, one of the essential components for the initiation of protein synthesis. Stabilizes the binding of IF-2 and IF-3 on the 30S subunit to which N-formylmethionyl-tRNA(fMet) subsequently binds. Helps modulate mRNA selection, yielding the 30S pre-initiation complex (PIC). Upon addition of the 50S ribosomal subunit IF-1, IF-2 and IF-3 are released leaving the mature 70S translation initiation complex. The polypeptide is Translation initiation factor IF-1 (Staphylococcus aureus (strain USA300 / TCH1516)).